A 161-amino-acid polypeptide reads, in one-letter code: Dihydrofolate reductase (161 aa).

In terms of domain architecture, DHFR spans 2–161; sequence KISLISAISN…YNFCFEILSR (160 aa). A substrate-binding site is contributed by 6-8; the sequence is ISA. Residues 7-8 and 15-20 contribute to the NADP(+) site; these read SA and IGHNNK. Asp-28 serves as a coordination point for substrate. 44 to 47 contributes to the NADP(+) binding site; it reads GRLT. Arg-59 lines the substrate pocket. NADP(+)-binding positions include 64–66 and 96–101; these read ISH and IGGSKI. Thr-115 provides a ligand contact to substrate.

The protein belongs to the dihydrofolate reductase family.

The catalysed reaction is (6S)-5,6,7,8-tetrahydrofolate + NADP(+) = 7,8-dihydrofolate + NADPH + H(+). The protein operates within cofactor biosynthesis; tetrahydrofolate biosynthesis; 5,6,7,8-tetrahydrofolate from 7,8-dihydrofolate: step 1/1. Key enzyme in folate metabolism. Catalyzes an essential reaction for de novo glycine and purine synthesis, and for DNA precursor synthesis. This Buchnera aphidicola subsp. Schizaphis graminum (strain Sg) protein is Dihydrofolate reductase (folA).